Here is a 312-residue protein sequence, read N- to C-terminus: MNYLLTALIALLAPISVAYNVPHGFLTGEAVTSHSGPNDLDGELPATDEVKREKRGYFFPSHFQSDSGLLSRSEHPNEYLKKWITHEHNRYRRMVPASDMNMLYWSDELAASAQRHADTCDFRHSRGRINVGENIWAAPYSNYSDAISIWFNEVHNPRCGCNHAYKHCCGHYVQVVWAKTNLVGCGFSRCRDVQGVWGRGHRNVFVCHYNPQGNTVFVTARGQLYAMPAFTWASGDNGKCSNCPANAPACYQGLCYMPKNYEAPTTTTESTTTSTTTEEPTTTCEPDEPEAEGADNNQEEEEENNDGFRMRV.

The N-terminal stretch at 1 to 18 (MNYLLTALIALLAPISVA) is a signal peptide. The SCP domain occupies 87–209 (EHNRYRRMVP…GHRNVFVCHY (123 aa)). N-linked (GlcNAc...) asparagine glycosylation is present at N142. Residues 265 to 284 (TTTTESTTTSTTTEEPTTTC) are compositionally biased toward low complexity. Residues 265–312 (TTTTESTTTSTTTEEPTTTCEPDEPEAEGADNNQEEEEENNDGFRMRV) form a disordered region. Acidic residues predominate over residues 285–305 (EPDEPEAEGADNNQEEEEENN).

Belongs to the CRISP family. In terms of tissue distribution, expressed in hypodermal tissues.

Regulates body size morphogenesis, but does not affect male tail development. This Caenorhabditis elegans protein is Protein lon-1 (lon-1).